A 372-amino-acid polypeptide reads, in one-letter code: uncharacterized protein (372 aa).

A helical membrane pass occupies residues 224 to 244 (GSTVGVVIGVVIVIFIGFIII). The residue at position 329 (Ser-329) is a Phosphoserine.

Its subcellular location is the vacuole membrane. This is an uncharacterized protein from Saccharomyces cerevisiae (strain ATCC 204508 / S288c) (Baker's yeast).